The chain runs to 113 residues: Pancreatic progenitor cell differentiation and proliferation factor A (113 aa).

It belongs to the PPDPF family.

In terms of biological role, probable regulator of exocrine pancreas development. This is Pancreatic progenitor cell differentiation and proliferation factor A (ppdpf-a) from Xenopus laevis (African clawed frog).